We begin with the raw amino-acid sequence, 184 residues long: Photosystem I assembly protein Ycf4 (184 aa).

The next 2 membrane-spanning stretches (helical) occupy residues 22–42 (FCWAVILFLGSLGFLLVGTSS) and 57–77 (IVFFPQGIVMSFYGIAGLFIS).

Belongs to the Ycf4 family.

The protein localises to the plastid. The protein resides in the chloroplast thylakoid membrane. Seems to be required for the assembly of the photosystem I complex. The protein is Photosystem I assembly protein Ycf4 of Lactuca sativa (Garden lettuce).